Reading from the N-terminus, the 201-residue chain is Recombination protein RecR (201 aa).

A C4-type zinc finger spans residues Cys60–Cys75. The Toprim domain maps to Ala83–Pro178.

This sequence belongs to the RecR family.

In terms of biological role, may play a role in DNA repair. It seems to be involved in an RecBC-independent recombinational process of DNA repair. It may act with RecF and RecO. In Brucella melitensis biotype 2 (strain ATCC 23457), this protein is Recombination protein RecR.